The primary structure comprises 239 residues: Proteasome activator complex subunit 2 (239 aa).

N-acetylalanine is present on Ala-2. Phosphoserine is present on Ser-10. Positions 65–87 are disordered; sequence DIPIPDPPPKDDEMETDKQEKKE. Residues 72 to 87 show a composition bias toward basic and acidic residues; it reads PPKDDEMETDKQEKKE.

It belongs to the PA28 family. Heterodimer of PSME1 and PSME2, which forms a hexameric ring.

Functionally, implicated in immunoproteasome assembly and required for efficient antigen processing. The PA28 activator complex enhances the generation of class I binding peptides by altering the cleavage pattern of the proteasome. This is Proteasome activator complex subunit 2 (Psme2) from Mus musculus (Mouse).